The chain runs to 475 residues: Divinyl ether synthase CYP74M1 (475 aa).

A heme-binding site is contributed by Cys427.

This sequence belongs to the cytochrome P450 family. The cofactor is heme.

It carries out the reaction (13S)-hydroperoxy-(9Z,11E)-octadecadienoate = etheroleate + H2O. It catalyses the reaction (13S)-hydroperoxy-(9Z,11E,15Z)-octadecatrienoate = etherolenate + H2O. It functions in the pathway lipid metabolism; oxylipin biosynthesis. Divinyl ether synthase involved in oxylipin biosynthesis. Catalyzes the conversion of (13S)-hydroperoxy-(9Z,11E)-octadecadienoate (13-HPOD) to etheroleate and (13S)-hydroperoxy-(9Z,11E,15Z)-octadecatrienoate (13-HPOT) to etherolenate. Has no activity with the corresponding 9-hydroperoxides (9-HPOD and 9-HPOT). The protein is Divinyl ether synthase CYP74M1 of Selaginella moellendorffii (Spikemoss).